Here is a 469-residue protein sequence, read N- to C-terminus: MHTPTLTSTPTTATSVVDDTAPAASGKKVYIRTFGCQMNEYDSDKMSDVMAAAEGYTPTDDPEQADLILFNTCSVREKAQEKVFSDLGRVKHLKARGVLIGVGGCVASQEGAAIIERAPYVDVVFGPQTLHRLPQMLAQRARQGRPQVDISFPEIEKFDHLPPAKVDGAAAFVSIMEGCSKYCSYCVVPYTRGEEFSRPFDEVLTEVAGLADQGVKEVTLLGQNVNAYRGRMGDTSDIADFATLLEYVHEIPGIERIRYTTSHPNEFTPALIEAYARLPKLVNHLHLPVQHGSDRILSGMKRGYTVLEYKSTIRKLRAIRPDISLSTDFIVGFPGETDDDHARTMKLIDDIGFDASFSFIFSPRPGTPAAALHDDTSYEVKLARLQQLQATIEDNVRRISERRVGTVQRVLVEGPSRRDPNELMGRTECNRIVNFDGGPNAARLVGRMIDIRITLAYPHSLRGEPVLRD.

The MTTase N-terminal domain occupies 27–142; the sequence is KKVYIRTFGC…LPQMLAQRAR (116 aa). Residues Cys-36, Cys-73, Cys-105, Cys-179, Cys-183, and Cys-186 each contribute to the [4Fe-4S] cluster site. Residues 165–398 form the Radical SAM core domain; sequence KVDGAAAFVS…QATIEDNVRR (234 aa). The TRAM domain maps to 401-467; it reads ERRVGTVQRV…PHSLRGEPVL (67 aa).

Belongs to the methylthiotransferase family. MiaB subfamily. As to quaternary structure, monomer. The cofactor is [4Fe-4S] cluster.

The protein resides in the cytoplasm. The enzyme catalyses N(6)-dimethylallyladenosine(37) in tRNA + (sulfur carrier)-SH + AH2 + 2 S-adenosyl-L-methionine = 2-methylsulfanyl-N(6)-dimethylallyladenosine(37) in tRNA + (sulfur carrier)-H + 5'-deoxyadenosine + L-methionine + A + S-adenosyl-L-homocysteine + 2 H(+). Catalyzes the methylthiolation of N6-(dimethylallyl)adenosine (i(6)A), leading to the formation of 2-methylthio-N6-(dimethylallyl)adenosine (ms(2)i(6)A) at position 37 in tRNAs that read codons beginning with uridine. The polypeptide is tRNA-2-methylthio-N(6)-dimethylallyladenosine synthase (Leptothrix cholodnii (strain ATCC 51168 / LMG 8142 / SP-6) (Leptothrix discophora (strain SP-6))).